The primary structure comprises 130 residues: Small ribosomal subunit protein uS9 (130 aa).

It belongs to the universal ribosomal protein uS9 family.

The polypeptide is Small ribosomal subunit protein uS9 (Cupriavidus taiwanensis (strain DSM 17343 / BCRC 17206 / CCUG 44338 / CIP 107171 / LMG 19424 / R1) (Ralstonia taiwanensis (strain LMG 19424))).